The chain runs to 316 residues: Ribosomal protein L11 methyltransferase (316 aa).

The S-adenosyl-L-methionine site is built by threonine 157, glycine 178, aspartate 200, and asparagine 243.

The protein belongs to the methyltransferase superfamily. PrmA family.

The protein localises to the cytoplasm. The catalysed reaction is L-lysyl-[protein] + 3 S-adenosyl-L-methionine = N(6),N(6),N(6)-trimethyl-L-lysyl-[protein] + 3 S-adenosyl-L-homocysteine + 3 H(+). Its function is as follows. Methylates ribosomal protein L11. The chain is Ribosomal protein L11 methyltransferase from Streptococcus pneumoniae serotype 2 (strain D39 / NCTC 7466).